The sequence spans 95 residues: Auxin-responsive protein SAUR27 (95 aa).

The protein belongs to the ARG7 family. Interacts with PP2C-D1. Higher expression in thermo-responsive cultivars (e.g. cv. Alst-1, cv. Ang-0 and cv. Com-0) than in low thermo-responsive cultivars (e.g. cv. Dja-1, cv. El-0 and cv. Kon).

The protein resides in the cell membrane. Its function is as follows. Functions as a positive effector of cell expansion through modulation of auxin transport. Involved in thermo-responsiveness of plant architecture. Enhances plasma membrane H(+)-ATPase. The sequence is that of Auxin-responsive protein SAUR27 from Arabidopsis thaliana (Mouse-ear cress).